The chain runs to 441 residues: 2-oxoisovalerate dehydrogenase subunit alpha, mitochondrial (441 aa).

The N-terminal 17 residues, 1–17 (MISQSYRILSRISRNNE), are a transit peptide targeting the mitochondrion. 145 to 147 (QYR) is a binding site for thiamine diphosphate. K(+) is bound by residues Ser194, Thr199, and Gln200.

It belongs to the BCKDHA family. Heterotetramer of alpha and beta chains. Thiamine diphosphate is required as a cofactor.

The protein resides in the mitochondrion matrix. It carries out the reaction N(6)-[(R)-lipoyl]-L-lysyl-[protein] + 3-methyl-2-oxobutanoate + H(+) = N(6)-[(R)-S(8)-2-methylpropanoyldihydrolipoyl]-L-lysyl-[protein] + CO2. Functionally, the branched-chain alpha-keto dehydrogenase complex catalyzes the overall conversion of alpha-keto acids to acyl-CoA and CO(2). It contains multiple copies of three enzymatic components: branched-chain alpha-keto acid decarboxylase (E1), lipoamide acyltransferase (E2) and lipoamide dehydrogenase (E3). The chain is 2-oxoisovalerate dehydrogenase subunit alpha, mitochondrial (bkdA) from Dictyostelium discoideum (Social amoeba).